The primary structure comprises 200 residues: Probable GTP-binding protein EngB (200 aa).

The EngB-type G domain maps to Asp22–Glu197. GTP contacts are provided by residues Gly30 to Ser37, Gly57 to Leu61, Asp78 to Gly81, Thr145 to Asp148, and Phe176 to Ala178. Residues Ser37 and Thr59 each contribute to the Mg(2+) site.

This sequence belongs to the TRAFAC class TrmE-Era-EngA-EngB-Septin-like GTPase superfamily. EngB GTPase family. The cofactor is Mg(2+).

In terms of biological role, necessary for normal cell division and for the maintenance of normal septation. This Trichlorobacter lovleyi (strain ATCC BAA-1151 / DSM 17278 / SZ) (Geobacter lovleyi) protein is Probable GTP-binding protein EngB.